The primary structure comprises 284 residues: Pantothenate synthetase (284 aa).

30–37 (MGALHNGH) is a binding site for ATP. Catalysis depends on histidine 37, which acts as the Proton donor. Position 61 (glutamine 61) interacts with (R)-pantoate. Beta-alanine is bound at residue glutamine 61. Position 147–150 (147–150 (GEKD)) interacts with ATP. Glutamine 153 serves as a coordination point for (R)-pantoate. ATP-binding positions include leucine 176 and 184-187 (SSSR).

Belongs to the pantothenate synthetase family. As to quaternary structure, homodimer.

It is found in the cytoplasm. It carries out the reaction (R)-pantoate + beta-alanine + ATP = (R)-pantothenate + AMP + diphosphate + H(+). The protein operates within cofactor biosynthesis; (R)-pantothenate biosynthesis; (R)-pantothenate from (R)-pantoate and beta-alanine: step 1/1. Catalyzes the condensation of pantoate with beta-alanine in an ATP-dependent reaction via a pantoyl-adenylate intermediate. This is Pantothenate synthetase from Bartonella henselae (strain ATCC 49882 / DSM 28221 / CCUG 30454 / Houston 1) (Rochalimaea henselae).